The primary structure comprises 506 residues: MERTLLQWRLLPLLALIVALFSFFFASPRSLQGNNKCSLLPHDHYWISSKRIVTPNGLISGSVEVKGGIIVSVVKEVDWHKSQRSRVKVIDYGEAVLMPGLIDVHVHLDDPGRSEWEGFPSGTKAAAAGGITTLVDMPLNSFPSTVSPETLKLKIEAAKNRIHVDVGFWGGLVPDNALNSSALESLLDAGVLGLKSFMCPSGINDFPMTNITHIKEGLSVLAKYKRPLLVHAEIERDLEIEDGSENDPRSYLTYLKTRPTSWEEGAIRNLLSVTENTRIGGSAEGAHLHIVHLSDASSSLDLIKEAKGKGDSVTVETCPHYLAFSAEEIPEGDTRFKCSPPIRDAANREKLWEALMEGDIDMLSSDHSPTKPELKLMSDGNFLKAWGGISSLQFVLPITWSYGKKYGVTLEQVTSWWSDRPSKLAGLHSKGAVTVGKHADLVVWEPEAEFDVDEDHPIHFKHPSISAYLGRRLSGKVVSTFVRGNLVFGEGKHASDACGSLQLATT.

Residues H105, H107, K195, H231, H292, and D366 each coordinate Zn(2+). Position 195 is an N6-carboxylysine (K195).

The protein belongs to the metallo-dependent hydrolases superfamily. Allantoinase family. Homotetramer. Zn(2+) serves as cofactor. Post-translationally, carboxylation allows a single lysine to coordinate two zinc ions.

It catalyses the reaction (S)-allantoin + H2O = allantoate + H(+). Its pathway is nitrogen metabolism; (S)-allantoin degradation; allantoate from (S)-allantoin: step 1/1. Catalyzes the conversion of allantoin (5-ureidohydantoin) to allantoate by hydrolytic cleavage of the five-member hydantoin ring. Catalyzes the first step of the ureide allantoin degradation followed by the sequential activity of AAH, UGLYAH and UAH which allows a complete purine breakdown without the intermediate generation of urea. This is Allantoinase (ALN) from Arabidopsis thaliana (Mouse-ear cress).